Reading from the N-terminus, the 248-residue chain is Tabserin (248 aa).

Residues 1 to 19 form the signal peptide; it reads MLKYSALFLYLIYVGGSES. One can recognise a Peptidase S1 domain in the interval 24–248; the sequence is IVGGVPVAEE…PYFENGLRKR (225 aa). Cysteine 49 and cysteine 65 are joined by a disulfide. Active-site charge relay system residues include histidine 64 and aspartate 111. 2 disulfides stabilise this stretch: cysteine 175/cysteine 189 and cysteine 201/cysteine 226. The active-site Charge relay system is serine 205.

Belongs to the peptidase S1 family. In terms of tissue distribution, expressed in salivary glands.

It localises to the secreted. Functionally, serine protease that inhibits blood coagulation in a dose-dependent manner. May act by destroying coagulant factors to inhibit blood coagulation. The polypeptide is Tabserin (Tabanus yao (Horsefly)).